The sequence spans 332 residues: Beta-ketoacyl-[acyl-carrier-protein] synthase III (332 aa).

Catalysis depends on residues cysteine 116 and histidine 255. Positions 256 to 260 (QANLR) are ACP-binding. The active site involves asparagine 285.

It belongs to the thiolase-like superfamily. FabH family. In terms of assembly, homodimer.

It localises to the cytoplasm. The catalysed reaction is malonyl-[ACP] + acetyl-CoA + H(+) = 3-oxobutanoyl-[ACP] + CO2 + CoA. It functions in the pathway lipid metabolism; fatty acid biosynthesis. Functionally, catalyzes the condensation reaction of fatty acid synthesis by the addition to an acyl acceptor of two carbons from malonyl-ACP. Catalyzes the first condensation reaction which initiates fatty acid synthesis and may therefore play a role in governing the total rate of fatty acid production. Possesses both acetoacetyl-ACP synthase and acetyl transacylase activities. Its substrate specificity determines the biosynthesis of branched-chain and/or straight-chain of fatty acids. The chain is Beta-ketoacyl-[acyl-carrier-protein] synthase III from Helicobacter hepaticus (strain ATCC 51449 / 3B1).